The following is a 340-amino-acid chain: Agmatinase, mitochondrial (340 aa).

Mn(2+) contacts are provided by His-150, Asp-173, His-175, Asp-177, Asp-264, and Asp-266.

This sequence belongs to the arginase family. Agmatinase subfamily. The cofactor is Mn(2+).

The protein localises to the mitochondrion. It carries out the reaction agmatine + H2O = urea + putrescine. The protein operates within amine and polyamine biosynthesis; putrescine biosynthesis via agmatine pathway; putrescine from agmatine: step 1/1. The chain is Agmatinase, mitochondrial (AGMAT) from Gallus gallus (Chicken).